The following is a 286-amino-acid chain: Protease HtpX homolog (286 aa).

2 consecutive transmembrane segments (helical) span residues 7–27 (TFML…MIGG) and 29–49 (SGMM…YWFS). Residue His131 participates in Zn(2+) binding. Glu132 is an active-site residue. His135 serves as a coordination point for Zn(2+). A run of 2 helical transmembrane segments spans residues 146-166 (LSAT…FFGG) and 177-197 (IAGI…QMAI). Residue Glu202 coordinates Zn(2+).

The protein belongs to the peptidase M48B family. The cofactor is Zn(2+).

It localises to the cell inner membrane. This chain is Protease HtpX homolog, found in Ralstonia nicotianae (strain ATCC BAA-1114 / GMI1000) (Ralstonia solanacearum).